A 47-amino-acid chain; its full sequence is MQLITDMAEWSSKPFRPDMSLTGWLAFVGLIIVAIILWQQIIRFIIE.

A helical membrane pass occupies residues 22-42 (TGWLAFVGLIIVAIILWQQII).

As to quaternary structure, heterodimer of P20 and P22; further multimerizes as hexamers of heterodimers. Part of the dodecameric portal complex that is composed of the packaging efficiency factor P6, the DNA packaging ATPase P9, and the internal heterododecamer P20/P22 which spans the virion inner membrane.

Its subcellular location is the virion membrane. Together with P22, forms the internal part of the portal complex embeded in the virion internal membrane and which plays critical roles in genome packaging and genome ejection. Both proteins multimerize as a single ring-shaped heterdodecamer arranged around a central channel and interact with the P6/P9 external part of the portal. This is Packaging protein P22 (XXII) from Enterobacteria phage PRD1 (Bacteriophage PRD1).